A 181-amino-acid polypeptide reads, in one-letter code: MECIQHESCFDLDDRENAQQLEVQEGTEMVSITQAAKLHNVTRQAIYVAIKQKKLKASKTTRWEIDLKDLEDYKRNRYSRKKSLYQGELLFDNDKGFYSVNQVADMLGIPVQKVYYATRTGTMRGERKGAAWVISQSEIDRYKSEYLNKQTVKKMKEVAVEHPTATPADAVFSGTALFEND.

This sequence belongs to the EUO family.

The polypeptide is Early upstream open reading frame (Chlamydia caviae (strain ATCC VR-813 / DSM 19441 / 03DC25 / GPIC) (Chlamydophila caviae)).